The sequence spans 178 residues: Cytidylate kinase (178 aa).

7–15 (GLPGTGTTT) contributes to the ATP binding site.

It belongs to the cytidylate kinase family. Type 2 subfamily.

Its subcellular location is the cytoplasm. It carries out the reaction CMP + ATP = CDP + ADP. It catalyses the reaction dCMP + ATP = dCDP + ADP. The chain is Cytidylate kinase (cmk) from Methanocaldococcus jannaschii (strain ATCC 43067 / DSM 2661 / JAL-1 / JCM 10045 / NBRC 100440) (Methanococcus jannaschii).